A 179-amino-acid chain; its full sequence is Large ribosomal subunit protein uL5 (179 aa).

The protein belongs to the universal ribosomal protein uL5 family. Part of the 50S ribosomal subunit; part of the 5S rRNA/L5/L18/L25 subcomplex. Contacts the 5S rRNA and the P site tRNA. Forms a bridge to the 30S subunit in the 70S ribosome.

Functionally, this is one of the proteins that bind and probably mediate the attachment of the 5S RNA into the large ribosomal subunit, where it forms part of the central protuberance. In the 70S ribosome it contacts protein S13 of the 30S subunit (bridge B1b), connecting the 2 subunits; this bridge is implicated in subunit movement. Contacts the P site tRNA; the 5S rRNA and some of its associated proteins might help stabilize positioning of ribosome-bound tRNAs. The chain is Large ribosomal subunit protein uL5 from Microcystis aeruginosa (strain NIES-843 / IAM M-2473).